The chain runs to 90 residues: RING finger protein Z (90 aa).

The N-myristoyl glycine; by host moiety is linked to residue Gly-2. Residues 32-68 (CKSCWQKFDSLVRCHDHYLCRHCLNLLLSVSDRCPLC) form an RING-type; atypical zinc finger. The PPXY motif signature appears at 85 to 88 (PPPY).

The protein belongs to the arenaviridae Z protein family. Interacts with protein NP; this interaction probably directs the encapsidated genome to budding sites. Interacts (via RING-type zinc finger) with polymerase L; this interaction inhibits viral transcription and replication, Z partially blocks the product exit tunnel for the releasing nascent RNA product. Interacts with the glycoprotein complex; this interaction plays a role in virion budding. Interacts (via RING-type zinc finger) with host EIF4E; this interaction results in conformational changes of both interacting proteins and reduces EIF4E affinity for its substrate, the 5'-m7 G cap structure. Interacts (via late-budding domain) with host TSG101; this interaction is essential for budding and release of viral particles. Interacts with host RPLP0; this interaction may serve to load ribosome-like particles inside the virion. Interacts with host PML; this interaction induces PML bodies redistribution in the cytoplasm upon viral infection. Myristoylation is required for the role of RING finger protein Z in assembly and budding.

The protein localises to the virion. The protein resides in the host cytoplasm. Its subcellular location is the host perinuclear region. It localises to the host cell membrane. Functionally, plays a crucial role in virion assembly and budding. Expressed late in the virus life cycle, it acts as an inhibitor of viral transcription and RNA synthesis by interacting with the viral polymerase L. Presumably recruits the NP encapsidated genome to cellular membranes at budding sites via direct interaction with NP. Plays critical roles in the final steps of viral release by interacting with host TSG101, a member of the vacuolar protein-sorting pathway and using other cellular host proteins involved in vesicle formation pathway. The budding of the virus progeny occurs after association of protein Z with the viral glycoprotein complex SSP-GP1-GP2 at the cell periphery, step that requires myristoylation of protein Z. Also selectively represses protein production by associating with host EIF4E. In cell-based minigenome assay, has an inhibitory effect on the ribonucleoprotein machinery (vRNP), which is responsible for the replication and transcription of the viral genome. The polypeptide is RING finger protein Z (Homo sapiens (Human)).